Here is a 140-residue protein sequence, read N- to C-terminus: Peptide methionine sulfoxide reductase MsrB (140 aa).

Residues 9–131 (DALWREKLTP…NSASIVLDSE (123 aa)) enclose the MsrB domain. 4 residues coordinate Zn(2+): Cys48, Cys51, Cys97, and Cys100. Cys120 functions as the Nucleophile in the catalytic mechanism.

Belongs to the MsrB Met sulfoxide reductase family. It depends on Zn(2+) as a cofactor.

The catalysed reaction is L-methionyl-[protein] + [thioredoxin]-disulfide + H2O = L-methionyl-(R)-S-oxide-[protein] + [thioredoxin]-dithiol. This chain is Peptide methionine sulfoxide reductase MsrB, found in Cellvibrio japonicus (strain Ueda107) (Pseudomonas fluorescens subsp. cellulosa).